The sequence spans 424 residues: Histidine--tRNA ligase (424 aa).

This sequence belongs to the class-II aminoacyl-tRNA synthetase family. As to quaternary structure, homodimer.

It localises to the cytoplasm. It carries out the reaction tRNA(His) + L-histidine + ATP = L-histidyl-tRNA(His) + AMP + diphosphate + H(+). In Escherichia coli (strain 55989 / EAEC), this protein is Histidine--tRNA ligase.